We begin with the raw amino-acid sequence, 130 residues long: Small ribosomal subunit protein uS9 (130 aa).

It belongs to the universal ribosomal protein uS9 family.

This Buchnera aphidicola subsp. Baizongia pistaciae (strain Bp) protein is Small ribosomal subunit protein uS9.